The sequence spans 94 residues: Co-chaperonin GroES (94 aa).

This sequence belongs to the GroES chaperonin family. As to quaternary structure, heptamer of 7 subunits arranged in a ring. Interacts with the chaperonin GroEL.

Its subcellular location is the cytoplasm. Functionally, together with the chaperonin GroEL, plays an essential role in assisting protein folding. The GroEL-GroES system forms a nano-cage that allows encapsulation of the non-native substrate proteins and provides a physical environment optimized to promote and accelerate protein folding. GroES binds to the apical surface of the GroEL ring, thereby capping the opening of the GroEL channel. This is Co-chaperonin GroES from Thermoanaerobacter pseudethanolicus (strain ATCC 33223 / 39E) (Clostridium thermohydrosulfuricum).